The sequence spans 530 residues: 26S proteasome non-ATPase regulatory subunit 3 (530 aa).

Positions 1–16 (MKQEGSARRRGADKAK) are enriched in basic and acidic residues. Residues 1–65 (MKQEGSARRR…TEHSQRELDT (65 aa)) are disordered. Residues 17-30 (PPPGGEQEPPPPAP) show a composition bias toward pro residues. A Glycyl lysine isopeptide (Lys-Gly) (interchain with G-Cter in SUMO1); alternate cross-link involves residue Lys36. Lys36 participates in a covalent cross-link: Glycyl lysine isopeptide (Lys-Gly) (interchain with G-Cter in SUMO2); alternate. The PCI domain occupies 282–461 (ARYLYYTGRI…GYVQSKEMID (180 aa)). Residues Ser414 and Ser426 each carry the phosphoserine modification. A disordered region spans residues 496-530 (SYNKDLESAEERREREQQDLEFAKEMAEDDDDSFP). Over residues 497–521 (YNKDLESAEERREREQQDLEFAKEM) the composition is skewed to basic and acidic residues.

The protein belongs to the proteasome subunit S3 family. Component of the 19S proteasome regulatory particle complex. The 26S proteasome consists of a 20S core particle (CP) and two 19S regulatory subunits (RP). The regulatory particle is made of a lid composed of 9 subunits including PSMD3, a base containing 6 ATPases and few additional components. Interacts with UBQLN1 (via ubiquitin-like domain). Interacts with ERCC6.

Component of the 26S proteasome, a multiprotein complex involved in the ATP-dependent degradation of ubiquitinated proteins. This complex plays a key role in the maintenance of protein homeostasis by removing misfolded or damaged proteins, which could impair cellular functions, and by removing proteins whose functions are no longer required. Therefore, the proteasome participates in numerous cellular processes, including cell cycle progression, apoptosis, or DNA damage repair. In Mus musculus (Mouse), this protein is 26S proteasome non-ATPase regulatory subunit 3 (Psmd3).